The sequence spans 112 residues: Flowering-promoting factor 1-like protein 2 (112 aa).

It belongs to the FPF1 family. In terms of tissue distribution, expressed in leaves and in some parts of the flowers, mainly in the sepals.

Its function is as follows. Modulates the competence to flowering of apical meristems. This Arabidopsis thaliana (Mouse-ear cress) protein is Flowering-promoting factor 1-like protein 2 (FLP2).